Here is a 423-residue protein sequence, read N- to C-terminus: Pseudouridylate synthase 1 homolog (423 aa).

The interval 32–75 is disordered; the sequence is AGNKVPPALASHQPDRKGRGGWVWEETEHPAKRVKGGEDEEPPR. Positions 57–68 are enriched in basic and acidic residues; the sequence is ETEHPAKRVKGG. Catalysis depends on D142, which acts as the Nucleophile. The disordered stretch occupies residues 403–423; it reads ADTGAKVPSSLEGSEGDGDTD. Phosphoserine is present on residues S411 and S416. T422 bears the Phosphothreonine mark.

The protein belongs to the tRNA pseudouridine synthase TruA family. Monomer. Forms a complex with RARG and the SRA1 RNA in the nucleus.

It localises to the nucleus. The protein resides in the cytoplasm. Its subcellular location is the mitochondrion. It carries out the reaction a uridine in tRNA = a pseudouridine in tRNA. It catalyses the reaction uridine(38/39/40) in tRNA = pseudouridine(38/39/40) in tRNA. The enzyme catalyses a uridine in mRNA = a pseudouridine in mRNA. In terms of biological role, pseudouridylate synthase that catalyzes pseudouridylation of tRNAs and mRNAs. Acts on positions 27/28 in the anticodon stem and also positions 34 and 36 in the anticodon of an intron containing tRNA. Also catalyzes pseudouridylation of mRNAs: mediates pseudouridylation of mRNAs with the consensus sequence 5'-UGUAG-3'. Acts as a regulator of pre-mRNA splicing by mediating pseudouridylation of pre-mRNAs at locations associated with alternatively spliced regions. Pseudouridylation of pre-mRNAs near splice sites directly regulates mRNA splicing and mRNA 3'-end processing. Involved in regulation of nuclear receptor activity through pseudouridylation of SRA1 mRNA. Does not form pseudouridine when expressed in vitro. The sequence is that of Pseudouridylate synthase 1 homolog from Mus musculus (Mouse).